The following is a 169-amino-acid chain: Putative pre-16S rRNA nuclease (169 aa).

The segment covering 1 to 19 has biased composition (basic and acidic residues); the sequence is MTDSDHRLPDRPGEGDPGR. The tract at residues 1 to 22 is disordered; sequence MTDSDHRLPDRPGEGDPGRGRR.

Belongs to the YqgF nuclease family.

The protein localises to the cytoplasm. In terms of biological role, could be a nuclease involved in processing of the 5'-end of pre-16S rRNA. The chain is Putative pre-16S rRNA nuclease from Mycobacterium sp. (strain JLS).